Here is a 188-residue protein sequence, read N- to C-terminus: Elongation factor P (188 aa).

It belongs to the elongation factor P family.

It localises to the cytoplasm. The protein operates within protein biosynthesis; polypeptide chain elongation. Its function is as follows. Involved in peptide bond synthesis. Stimulates efficient translation and peptide-bond synthesis on native or reconstituted 70S ribosomes in vitro. Probably functions indirectly by altering the affinity of the ribosome for aminoacyl-tRNA, thus increasing their reactivity as acceptors for peptidyl transferase. This chain is Elongation factor P, found in Pseudomonas aeruginosa (strain LESB58).